An 83-amino-acid chain; its full sequence is Large ribosomal subunit protein uL23 (83 aa).

Belongs to the universal ribosomal protein uL23 family. Part of the 50S ribosomal subunit. Contacts protein L29.

Binds to 23S rRNA. One of the proteins that surrounds the polypeptide exit tunnel on the outside of the ribosome. The polypeptide is Large ribosomal subunit protein uL23 (Archaeoglobus fulgidus (strain ATCC 49558 / DSM 4304 / JCM 9628 / NBRC 100126 / VC-16)).